The following is a 335-amino-acid chain: Thioredoxin-related transmembrane protein 4 (335 aa).

Positions 1–20 (MTGGFCVPVLLAAWLAAAAA) are cleaved as a signal peptide. A Thioredoxin domain is found at 26–133 (AALPAEESRV…YEDLQNYILE (108 aa)). Active-site nucleophile residues include Cys60 and Cys63. A disulfide bridge links Cys60 with Cys63. The chain crosses the membrane as a helical span at residues 186 to 206 (VFFVIATLVFGLFMGLILVVI). The interval 222-316 (CEQEQSTGEA…EDGAHPADTQ (95 aa)) is disordered. Residues 238-280 (QDAEEEKDDSNEEENKDSLVDDEEEKEDIGDEDEGEEDEEEDN) show a composition bias toward acidic residues. Phosphoserine is present on residues Ser247 and Ser255. Residues 286-298 (AEERSDTNERAVV) show a composition bias toward basic and acidic residues.

The protein localises to the nucleus inner membrane. It is found in the endoplasmic reticulum membrane. The polypeptide is Thioredoxin-related transmembrane protein 4 (Tmx4) (Mus musculus (Mouse)).